A 520-amino-acid chain; its full sequence is Mitogen-activated protein kinase kinase 3 (520 aa).

Ser-69 carries the phosphoserine modification. The Protein kinase domain occupies 83 to 339 (MRVFGAIGSG…ADQLLSHPFI (257 aa)). Residues 89–97 (IGSGASSVV) and Lys-112 contribute to the ATP site. Asp-207 acts as the Proton acceptor in catalysis. Phosphoserine is present on Ser-235. A phosphothreonine mark is found at Thr-241 and Thr-245. In terms of domain architecture, NTF2 spans 366-516 (LADMLTIHYY…YFLAKQELYI (151 aa)).

Belongs to the protein kinase superfamily. STE Ser/Thr protein kinase family. MAP kinase kinase subfamily. Interacts with MPK1, MPK2 and MPK7. Interacts with P.syringae type III effector HopF2. Interacts with MPK14. Binds to MAPKKK17 and MAPKKK18. Binds to MAPKKK20. Phosphorylation at Ser-235 and Thr-241 by MAP kinase kinase kinases positively regulates kinase activity. Phosphorylated by MAPKKK20. In terms of tissue distribution, mostly expressed in leaves, and, to a lower extent, in roots, seedlings, flower buds, flowers and siliques.

It is found in the nucleus. Its subcellular location is the cytoplasm. It carries out the reaction L-seryl-[protein] + ATP = O-phospho-L-seryl-[protein] + ADP + H(+). It catalyses the reaction L-threonyl-[protein] + ATP = O-phospho-L-threonyl-[protein] + ADP + H(+). The catalysed reaction is L-tyrosyl-[protein] + ATP = O-phospho-L-tyrosyl-[protein] + ADP + H(+). Its function is as follows. MKK3-MPK6 module plays an important role in the jasmonate signal transduction pathway through the negative regulation of MYC2/JIN1 expression. Activates by phosphorylation the downstream MPK6, MPK7 and MPK8. MKK3-MPK7 module acts as a positive regulator of PR1 gene expression. MKK3-MPK8 module negatively regulates ROS accumulation through controlling expression of the RBOHD gene. Component of the abscisic acid (ABA) signaling pathway that may act as ABA signal transducer in the context of abiotic stresses. Activator of the C group MAP kinases. Activates MPK7 in response to ABA. Mitogen-activated protein kinase (MAPK) that is specifically regulated by MAPKKK20 and mediates signaling that regulates cortical microtubule functions. The protein is Mitogen-activated protein kinase kinase 3 of Arabidopsis thaliana (Mouse-ear cress).